Here is a 313-residue protein sequence, read N- to C-terminus: Porphobilinogen deaminase (313 aa).

The residue at position 242 (cysteine 242) is an S-(dipyrrolylmethanemethyl)cysteine.

It belongs to the HMBS family. As to quaternary structure, monomer. The cofactor is dipyrromethane.

It carries out the reaction 4 porphobilinogen + H2O = hydroxymethylbilane + 4 NH4(+). The protein operates within porphyrin-containing compound metabolism; protoporphyrin-IX biosynthesis; coproporphyrinogen-III from 5-aminolevulinate: step 2/4. In terms of biological role, tetrapolymerization of the monopyrrole PBG into the hydroxymethylbilane pre-uroporphyrinogen in several discrete steps. In Yersinia pseudotuberculosis serotype O:1b (strain IP 31758), this protein is Porphobilinogen deaminase.